We begin with the raw amino-acid sequence, 488 residues long: Glutamyl-tRNA(Gln) amidotransferase subunit A (488 aa).

Catalysis depends on charge relay system residues K77 and S152. S176 (acyl-ester intermediate) is an active-site residue.

It belongs to the amidase family. GatA subfamily. In terms of assembly, heterotrimer of A, B and C subunits.

It catalyses the reaction L-glutamyl-tRNA(Gln) + L-glutamine + ATP + H2O = L-glutaminyl-tRNA(Gln) + L-glutamate + ADP + phosphate + H(+). In terms of biological role, allows the formation of correctly charged Gln-tRNA(Gln) through the transamidation of misacylated Glu-tRNA(Gln) in organisms which lack glutaminyl-tRNA synthetase. The reaction takes place in the presence of glutamine and ATP through an activated gamma-phospho-Glu-tRNA(Gln). This chain is Glutamyl-tRNA(Gln) amidotransferase subunit A, found in Streptococcus pyogenes serotype M12 (strain MGAS2096).